The primary structure comprises 299 residues: DNA-binding transcriptional repressor CapW (299 aa).

A compositionally biased stretch (basic and acidic residues) spans 1–15 (MPDNFREGDKQDSQK). A disordered region spans residues 1 to 21 (MPDNFREGDKQDSQKGRQGAR). The tract at residues 1-95 (MPDNFREGDK…LFQPVYMTSS (95 aa)) is winged HTH domain. The tract at residues 96–207 (LECYLNDLLQ…LSRIVQAQNA (112 aa)) is WYL domain. The WYL domain occupies 131-211 (LRRLDTDVVS…VQAQNAGPDE (81 aa)). Residues 156 to 200 (YQSMSDPQGSKRTLTPHSLVHDGYRWHTRAWCHKRGEYRDFLLSR) are probable ligand-binding region. Positions 208–299 (GPDEERANGD…KDEIYALLKQ (92 aa)) are WCX domain.

Homodimer.

Its function is as follows. Transcriptional regulator of a CBASS antivirus system. CBASS (cyclic oligonucleotide-based antiphage signaling system) provides immunity against bacteriophage. The CD-NTase protein synthesizes cyclic nucleotides in response to infection; these serve as specific second messenger signals. The signals activate a diverse range of effectors, leading to bacterial cell death and thus abortive phage infection. A type III CBASS system. Expression of this CBASS system (Cap18-Cap6-Cap7-CdnC-CapW-Cap17) in a susceptible E.coli (strain MG1655) confers resistance to bacteriophage P1. Binds specifically to and represses expression from the CBASS promoter, found between the genes for divergently transcribed capW and cdnC. The sequence is that of DNA-binding transcriptional repressor CapW from Escherichia coli (strain KTE188).